A 142-amino-acid polypeptide reads, in one-letter code: Large ribosomal subunit protein uL11 (142 aa).

It belongs to the universal ribosomal protein uL11 family. In terms of assembly, part of the ribosomal stalk of the 50S ribosomal subunit. Interacts with L10 and the large rRNA to form the base of the stalk. L10 forms an elongated spine to which L12 dimers bind in a sequential fashion forming a multimeric L10(L12)X complex. Post-translationally, one or more lysine residues are methylated.

Functionally, forms part of the ribosomal stalk which helps the ribosome interact with GTP-bound translation factors. The sequence is that of Large ribosomal subunit protein uL11 from Rhodospirillum rubrum (strain ATCC 11170 / ATH 1.1.1 / DSM 467 / LMG 4362 / NCIMB 8255 / S1).